Consider the following 822-residue polypeptide: Stemar-13-ene synthase (822 aa).

Over residues 1–10 the composition is skewed to polar residues; it reads MMLLSSSYSG. The tract at residues 1 to 29 is disordered; sequence MMLLSSSYSGGQFPGVSPLGTRPKRSTTV. Mg(2+)-binding residues include Asp553, Asp557, Asn698, Thr702, and Glu706. A DDXXD motif motif is present at residues 553–557; the sequence is DDLFD.

Belongs to the terpene synthase family. Mg(2+) serves as cofactor.

It catalyses the reaction 9alpha-copalyl diphosphate = stemar-13-ene + diphosphate. In terms of biological role, catalyzes the conversion of syn-copalyl diphosphate to the phytoalexin precursor stemarene. The chain is Stemar-13-ene synthase (KSL8) from Oryza sativa subsp. japonica (Rice).